A 164-amino-acid polypeptide reads, in one-letter code: C-phycoerythrin alpha chain (164 aa).

Cys82 and Cys139 together coordinate (2R,3E)-phycoerythrobilin.

This sequence belongs to the phycobiliprotein family. In terms of assembly, heterodimer of an alpha and a beta chain. In terms of processing, contains two covalently linked bilin chromophores.

Its subcellular location is the cellular thylakoid membrane. Its function is as follows. Light-harvesting photosynthetic bile pigment-protein from the phycobiliprotein complex. This chain is C-phycoerythrin alpha chain (cpeA), found in Synechocystis sp. (strain PCC 6701).